The primary structure comprises 535 residues: Dimethylaniline monooxygenase [N-oxide-forming] 2 (535 aa).

Position 2 is an N-acetylalanine (alanine 2). FAD contacts are provided by residues 9–13 (GAGVS), glutamate 32, 40–41 (LW), and 61–62 (NT). Residues 60-61 (TN) and 195-198 (SASD) each bind NADP(+). Lysine 492 participates in a covalent cross-link: Glycyl lysine isopeptide (Lys-Gly) (interchain with G-Cter in SUMO). The chain crosses the membrane as a helical span at residues 510–530 (LSASFLMKILALVAVFVAFFS).

The protein belongs to the FMO family. It depends on FAD as a cofactor. The cofactor is Mg(2+). As to expression, lung.

It localises to the microsome membrane. Its subcellular location is the endoplasmic reticulum membrane. Its function is as follows. Catalyzes the oxidative metabolism of numerous xenobiotics, including mainly therapeutic drugs and insecticides that contain a soft nucleophile, most commonly nitrogen and sulfur and participates to their bioactivation. This is Dimethylaniline monooxygenase [N-oxide-forming] 2 from Cavia porcellus (Guinea pig).